The primary structure comprises 778 residues: Endonuclease MutS2 (778 aa).

328–335 lines the ATP pocket; the sequence is GPNTGGKT. Residues 702 to 777 form the Smr domain; that stretch reads LDLRGKRYEE…GSGATIVTFK (76 aa).

The protein belongs to the DNA mismatch repair MutS family. MutS2 subfamily. As to quaternary structure, homodimer. Binds to stalled ribosomes, contacting rRNA.

Functionally, endonuclease that is involved in the suppression of homologous recombination and thus may have a key role in the control of bacterial genetic diversity. Its function is as follows. Acts as a ribosome collision sensor, splitting the ribosome into its 2 subunits. Detects stalled/collided 70S ribosomes which it binds and splits by an ATP-hydrolysis driven conformational change. Acts upstream of the ribosome quality control system (RQC), a ribosome-associated complex that mediates the extraction of incompletely synthesized nascent chains from stalled ribosomes and their subsequent degradation. Probably generates substrates for RQC. The protein is Endonuclease MutS2 of Streptococcus pneumoniae (strain P1031).